The sequence spans 296 residues: CCAAT/enhancer-binding protein beta (296 aa).

Residues 1–22 (MHRLLAWDAACLPPPPAAFRPM) form a required for Lys-133 sumoylation region. At Arg-3 the chain carries Asymmetric dimethylarginine; by CARM1. Residues 22–104 (MEVANFYYEP…YGAKPSKKPA (83 aa)) are required for MYC transcriptional repression. N6-acetyllysine; alternate is present on Lys-39. Residue Lys-39 is modified to N6-methylated lysine; alternate. An N6-acetyllysine; by KAT2A and KAT2B mark is found at Lys-98 and Lys-101. Lys-102 is modified (N6-acetyllysine; by KAT2A and KAT2B; alternate). Glycyl lysine isopeptide (Lys-Gly) (interchain with G-Cter in SUMO2); alternate cross-links involve residues Lys-102 and Lys-133. Lys-133 is covalently cross-linked (Glycyl lysine isopeptide (Lys-Gly) (interchain with G-Cter in SUMO); alternate). A Glycyl lysine isopeptide (Lys-Gly) (interchain with G-Cter in SUMO2) cross-link involves residue Lys-144. Positions 171-199 (SGSSGSLSTSSSSSPPGTPSPADAKAAPA) are disordered. A Phosphothreonine; by GSK3-beta modification is found at Thr-179. 2 O-linked (GlcNAc) serine glycosylation sites follow: Ser-180 and Ser-181. At Ser-184 the chain carries Phosphoserine; by GSK3-beta. Thr-188 is modified (phosphothreonine; by RPS6KA1, CDK2 and MAPK). Glycyl lysine isopeptide (Lys-Gly) (interchain with G-Cter in SUMO2) cross-links involve residues Lys-211 and Lys-213. Thr-217 bears the Phosphothreonine; by RPS6KA1 and PKC/PRKCA mark. One can recognise a bZIP domain in the interval 222-285 (SDEYKMRRER…STLRNLFKQL (64 aa)). The interval 226–246 (KMRRERNNIAVRKSRDKAKMR) is basic motif. Position 239 is a phosphoserine; by PKC/PRKCA (Ser-239). The leucine-zipper stretch occupies residues 248–255 (LETQHKVL). Ser-276 carries the post-translational modification Phosphoserine; by CaMK2. Residue Lys-283 forms a Glycyl lysine isopeptide (Lys-Gly) (interchain with G-Cter in SUMO2) linkage.

It belongs to the bZIP family. C/EBP subfamily. In terms of assembly, binds DNA as a homodimer and as a heterodimer. Interacts with ATF4. Binds DNA as a heterodimer with ATF4. Interacts with MYB; within the complex, MYB and CEBPB bind to different promoter regions. Can form stable heterodimers with CEBPA, CEBPD and CEBPE. Interacts with SIX1. Isoform 2 and isoform 3 also form heterodimers. Interacts with TRIM28 and PTGES2. Interacts with PRDM16. Interacts with CCDC85B. Forms a complex with THOC5. Interacts with ZNF638; this interaction increases transcriptional activation. Interacts with CIDEA and CIDEC. Interaction with CIDEA increases transcriptional activation of a subset of CEBPB downstream target genes, including ID2, IGF1, PRLR, SOCS1, SOCS3, XDH. Interaction with CIDEC increases transcriptional activation of SOCS1, SOCS3, TGFB1, TGFBR1, ID2 and XDH. Interacts with DDIT3/CHOP. Interacts with EP300; recruits EP300 to chromatin. Interacts with RORA; the interaction disrupts interaction with EP300. Interacts (not methylated) with MED23, MED26, SMARCA2, SMARCB1 and SMARCC1. Interacts with KAT2A and KAT2B. Interacts with ATF5; EP300 is required for ATF5 and CEBPB interaction and DNA binding. Interacts with NFE2L1; the heterodimer represses expression of DSPP during odontoblast differentiation. Sumoylated by polymeric chains of SUMO2 or SUMO3. Sumoylation at Lys-133 is required for inhibition of T-cells proliferation. In adipocytes, sumoylation at Lys-133 by PIAS1 leads to ubiquitination and subsequent proteasomal degradation. Desumoylated by SENP2, which abolishes ubiquitination and stabilizes protein levels. Post-translationally, ubiquitinated, leading to proteasomal degradation. In terms of processing, phosphorylated at Thr-188 by MAPK and CDK2, serves to prime phosphorylation at Thr-179 and Ser-184 by GSK3B and acquire DNA-binding as well as transactivation activities, required to induce adipogenesis. MAPK and CDK2 act sequentially to maintain Thr-188 in the primed phosphorylated state during mitotical cloning expansion and thereby progression of terminal differentiation. Phosphorylation at Thr-217 enhances transactivation activity. Phosphorylation at Ser-276 in response to calcium increases transactivation activity. Phosphorylated at Thr-188 by RPS6KA1. O-glycosylated, glycosylation at Ser-180 and Ser-181 prevents phosphorylation on Thr-188, Ser-184 and Thr-179 and DNA binding activity which delays the adipocyte differentiation program. Post-translationally, acetylated. Acetylation at Lys-39 is an important and dynamic regulatory event that contributes to its ability to transactivate target genes, including those associated with adipogenesis and adipocyte function. Deacetylation by HDAC1 represses its transactivation activity. Acetylated by KAT2A and KAT2B within a cluster of lysine residues between amino acids 98-102, this acetylation is strongly induced by glucocorticoid treatment and enhances transactivation activity. In terms of processing, methylated. Methylation at Arg-3 by CARM1 and at Lys-39 by EHMT2, inhibits transactivation activity. Methylation is probably inhibited by phosphorylation at Thr-188. In terms of tissue distribution, abundantly expressed in myoblasts. Enriched in brown adipose tissue (BAT) versus white adipose tissue (WAT). Expressed in hepatocytes (at protein level). Expressed in T lymphocytes. The expression in granulosa cells of antral follicles is induced by luteinizing hormone. Expressed in chondrocytes and osteoblasts (at protein level).

It is found in the nucleus. The protein resides in the cytoplasm. In terms of biological role, important transcription factor regulating the expression of genes involved in immune and inflammatory responses. Also plays a significant role in adipogenesis, as well as in the gluconeogenic pathway, liver regeneration, and hematopoiesis. The consensus recognition site is 5'-T[TG]NNGNAA[TG]-3'. Its functional capacity is governed by protein interactions and post-translational protein modifications. During early embryogenesis, plays essential and redundant roles with CEBPA. Has a promitotic effect on many cell types such as hepatocytes and adipocytes but has an antiproliferative effect on T-cells by repressing MYC expression, facilitating differentiation along the T-helper 2 lineage. Binds to regulatory regions of several acute-phase and cytokines genes and plays a role in the regulation of acute-phase reaction and inflammation. Also plays a role in intracellular bacteria killing. During adipogenesis, is rapidly expressed and, after activation by phosphorylation, induces CEBPA and PPARG, which turn on the series of adipocyte genes that give rise to the adipocyte phenotype. The delayed transactivation of the CEBPA and PPARG genes by CEBPB appears necessary to allow mitotic clonal expansion and thereby progression of terminal differentiation. Essential for female reproduction because of a critical role in ovarian follicle development. Restricts osteoclastogenesis. Together with NFE2L1; represses expression of DSPP during odontoblast differentiation. Functionally, essential for gene expression induction in activated macrophages. Plays a major role in immune responses such as CD4(+) T-cell response, granuloma formation and endotoxin shock. Not essential for intracellular bacteria killing. Acts as a dominant negative through heterodimerization with isoform 2. Promotes osteoblast differentiation and osteoclastogenesis. The chain is CCAAT/enhancer-binding protein beta from Mus musculus (Mouse).